The following is a 420-amino-acid chain: ATP phosphoribosyltransferase regulatory subunit (420 aa).

Belongs to the class-II aminoacyl-tRNA synthetase family. HisZ subfamily. As to quaternary structure, heteromultimer composed of HisG and HisZ subunits.

The protein localises to the cytoplasm. The protein operates within amino-acid biosynthesis; L-histidine biosynthesis; L-histidine from 5-phospho-alpha-D-ribose 1-diphosphate: step 1/9. Functionally, required for the first step of histidine biosynthesis. May allow the feedback regulation of ATP phosphoribosyltransferase activity by histidine. The protein is ATP phosphoribosyltransferase regulatory subunit of Bacillus cereus (strain G9842).